The following is a 467-amino-acid chain: Abscisic acid 8'-hydroxylase 1 (467 aa).

Residues 5-24 (ALFLTLFAGSLFLYFLRCLI) form a helical membrane-spanning segment. Cys-411 provides a ligand contact to heme.

This sequence belongs to the cytochrome P450 family. The cofactor is heme. Mainly expressed in flowers, siliques, roots and stems. Lower expression in rosette leaves and dry seeds. Expressed in vascular tissues of embryo during the seed development.

It is found in the membrane. The catalysed reaction is 2-cis-(+)-abscisate + reduced [NADPH--hemoprotein reductase] + O2 = (+)-8'-hydroxyabscisate + oxidized [NADPH--hemoprotein reductase] + H2O + H(+). Its pathway is plant hormone degradation; abscisic acid degradation. Its function is as follows. Involved in the oxidative degradation of abscisic acid. Plays an important role in determining abscisic acid levels in dry seeds and in the control of postgermination growth. The polypeptide is Abscisic acid 8'-hydroxylase 1 (CYP707A1) (Arabidopsis thaliana (Mouse-ear cress)).